The sequence spans 216 residues: MTKKYSLGFVGRKAGMSRVFTEDGRSVPVTLIEATPNRIAQIKTVEVDGYSAVQITVGARRAALVNKPAAGHFAKAKVEAGRGLWEFRVEDAQLGDFAVGGEIKADIFEVGQKVDVQGVTKGKGFQGTIKRYNFRMGDATHGNSLSHRAPGSLGQRQTPGRVFPGKKMSGHMGAVQQSTQNLEVVKVDVERGLIAIRGAVPGAAGGDVIVRPASKA.

Gln157 is subject to N5-methylglutamine.

The protein belongs to the universal ribosomal protein uL3 family. In terms of assembly, part of the 50S ribosomal subunit. Forms a cluster with proteins L14 and L19. In terms of processing, methylated by PrmB.

Its function is as follows. One of the primary rRNA binding proteins, it binds directly near the 3'-end of the 23S rRNA, where it nucleates assembly of the 50S subunit. The protein is Large ribosomal subunit protein uL3 of Xanthomonas campestris pv. campestris (strain 8004).